The chain runs to 172 residues: RNA silencing suppressor p19 (172 aa).

Residues 1 to 20 (MERAIQGNDAREQANSERWD) are compositionally biased toward basic and acidic residues. Positions 1–37 (MERAIQGNDAREQANSERWDGGSGGTTSPFKLPDESP) are disordered.

It belongs to the tombusvirus protein p19 family. As to quaternary structure, homodimer.

Functionally, viral suppressor of RNA silencing which binds specifically to silencing RNAs (siRNAs). Acts as a molecular caliper to specifically select siRNAs based on the length of the duplex region of the RNA. The chain is RNA silencing suppressor p19 from Tomato bushy stunt virus (strain Ja6) (TBSV).